Here is a 276-residue protein sequence, read N- to C-terminus: Bis(5'-nucleosyl)-tetraphosphatase, symmetrical (276 aa).

This sequence belongs to the Ap4A hydrolase family.

The enzyme catalyses P(1),P(4)-bis(5'-adenosyl) tetraphosphate + H2O = 2 ADP + 2 H(+). Hydrolyzes diadenosine 5',5'''-P1,P4-tetraphosphate to yield ADP. This chain is Bis(5'-nucleosyl)-tetraphosphatase, symmetrical, found in Neisseria gonorrhoeae (strain ATCC 700825 / FA 1090).